A 202-amino-acid chain; its full sequence is dTTP/UTP pyrophosphatase (202 aa).

Residue Asp-80 is the Proton acceptor of the active site.

Belongs to the Maf family. YhdE subfamily. It depends on a divalent metal cation as a cofactor.

The protein resides in the cytoplasm. It carries out the reaction dTTP + H2O = dTMP + diphosphate + H(+). It catalyses the reaction UTP + H2O = UMP + diphosphate + H(+). Functionally, nucleoside triphosphate pyrophosphatase that hydrolyzes dTTP and UTP. May have a dual role in cell division arrest and in preventing the incorporation of modified nucleotides into cellular nucleic acids. The polypeptide is dTTP/UTP pyrophosphatase (Alkalilimnicola ehrlichii (strain ATCC BAA-1101 / DSM 17681 / MLHE-1)).